The following is a 333-amino-acid chain: DNA repair and recombination protein RadA (333 aa).

127 to 134 lines the ATP pocket; it reads GEFGSGKT.

This sequence belongs to the eukaryotic RecA-like protein family.

Involved in DNA repair and in homologous recombination. Binds and assemble on single-stranded DNA to form a nucleoprotein filament. Hydrolyzes ATP in a ssDNA-dependent manner and promotes DNA strand exchange between homologous DNA molecules. This chain is DNA repair and recombination protein RadA, found in Pyrobaculum aerophilum (strain ATCC 51768 / DSM 7523 / JCM 9630 / CIP 104966 / NBRC 100827 / IM2).